The sequence spans 80 residues: MAKIGVEPSLTDVQEALKERGYDVVPLRGEQDARGCDCCVITGLDANIAGIHNIVTSGPVIEASGLTAEEICQKVEEKLR.

It belongs to the UPF0180 family.

In Geobacillus kaustophilus (strain HTA426), this protein is UPF0180 protein GK1051.